Consider the following 178-residue polypeptide: Inner membrane-spanning protein YciB (178 aa).

Helical transmembrane passes span 12-32, 50-70, 74-94, 120-140, and 145-165; these read LFFA…VAIV, PMQW…LVLH, FIMW…LISD, LTFA…FVAF, and AVWV…FVLA.

The protein belongs to the YciB family.

The protein resides in the cell inner membrane. Its function is as follows. Plays a role in cell envelope biogenesis, maintenance of cell envelope integrity and membrane homeostasis. The protein is Inner membrane-spanning protein YciB of Laribacter hongkongensis (strain HLHK9).